The sequence spans 171 residues: Translationally-controlled tumor protein homolog (171 aa).

In terms of domain architecture, TCTP spans 1 to 171 (MIIYKDIITG…FKDGLEIEKC (171 aa)).

This sequence belongs to the TCTP family.

Its subcellular location is the cytoplasm. In terms of biological role, involved in calcium binding and microtubule stabilization. The polypeptide is Translationally-controlled tumor protein homolog (tpt1) (Labeo rohita (Indian major carp)).